Reading from the N-terminus, the 651-residue chain is UvrABC system protein C (651 aa).

Residues 20–97 (ERCGVYRMFD…IKKFQPKFNI (78 aa)) enclose the GIY-YIG domain. Residues 207–242 (KALQENLSKKMEELSSQMRFEEAAEIRDRIKALSYV) enclose the UVR domain.

The protein belongs to the UvrC family. As to quaternary structure, interacts with UvrB in an incision complex.

It is found in the cytoplasm. Functionally, the UvrABC repair system catalyzes the recognition and processing of DNA lesions. UvrC both incises the 5' and 3' sides of the lesion. The N-terminal half is responsible for the 3' incision and the C-terminal half is responsible for the 5' incision. This Rickettsia akari (strain Hartford) protein is UvrABC system protein C.